The sequence spans 88 residues: Small ribosomal subunit protein uS15 (88 aa).

The protein belongs to the universal ribosomal protein uS15 family. Part of the 30S ribosomal subunit. Forms a bridge to the 50S subunit in the 70S ribosome, contacting the 23S rRNA.

One of the primary rRNA binding proteins, it binds directly to 16S rRNA where it helps nucleate assembly of the platform of the 30S subunit by binding and bridging several RNA helices of the 16S rRNA. Functionally, forms an intersubunit bridge (bridge B4) with the 23S rRNA of the 50S subunit in the ribosome. The chain is Small ribosomal subunit protein uS15 from Leptospira biflexa serovar Patoc (strain Patoc 1 / Ames).